A 275-amino-acid chain; its full sequence is Pantothenate synthetase (275 aa).

Residue 26–33 (MGNLHDGH) participates in ATP binding. Residue His-33 is the Proton donor of the active site. Gln-57 contacts (R)-pantoate. Residue Gln-57 coordinates beta-alanine. ATP is bound at residue 144-147 (GKKD). Residue Gln-150 coordinates (R)-pantoate. Residues Val-173 and 181–184 (LSSR) contribute to the ATP site.

It belongs to the pantothenate synthetase family. As to quaternary structure, homodimer.

Its subcellular location is the cytoplasm. The catalysed reaction is (R)-pantoate + beta-alanine + ATP = (R)-pantothenate + AMP + diphosphate + H(+). Its pathway is cofactor biosynthesis; (R)-pantothenate biosynthesis; (R)-pantothenate from (R)-pantoate and beta-alanine: step 1/1. Catalyzes the condensation of pantoate with beta-alanine in an ATP-dependent reaction via a pantoyl-adenylate intermediate. The polypeptide is Pantothenate synthetase (Azoarcus sp. (strain BH72)).